The sequence spans 257 residues: tRNA (guanine-N(7)-)-methyltransferase (257 aa).

Acidic residues predominate over residues 1 to 12 (MARDSEDQDMET). The segment at 1–25 (MARDSEDQDMETETNGAAEGLDPTS) is disordered. Residues Gly80, 103–104 (EI), 138–139 (NA), and Leu158 contribute to the S-adenosyl-L-methionine site. Asp161 is an active-site residue. 236-238 (SEE) is a binding site for S-adenosyl-L-methionine.

Belongs to the class I-like SAM-binding methyltransferase superfamily. TrmB family.

It is found in the nucleus. It carries out the reaction guanosine(46) in tRNA + S-adenosyl-L-methionine = N(7)-methylguanosine(46) in tRNA + S-adenosyl-L-homocysteine. It functions in the pathway tRNA modification; N(7)-methylguanine-tRNA biosynthesis. Functionally, catalyzes the formation of N(7)-methylguanine at position 46 (m7G46) in tRNA. This Drosophila ananassae (Fruit fly) protein is tRNA (guanine-N(7)-)-methyltransferase.